A 248-amino-acid chain; its full sequence is 23S rRNA (guanosine-2'-O-)-methyltransferase RlmB (248 aa).

S-adenosyl-L-methionine is bound by residues Gly-198, Leu-218, and Leu-227.

This sequence belongs to the class IV-like SAM-binding methyltransferase superfamily. RNA methyltransferase TrmH family. RlmB subfamily.

Its subcellular location is the cytoplasm. The catalysed reaction is guanosine(2251) in 23S rRNA + S-adenosyl-L-methionine = 2'-O-methylguanosine(2251) in 23S rRNA + S-adenosyl-L-homocysteine + H(+). Functionally, specifically methylates the ribose of guanosine 2251 in 23S rRNA. In Pseudomonas aeruginosa (strain ATCC 15692 / DSM 22644 / CIP 104116 / JCM 14847 / LMG 12228 / 1C / PRS 101 / PAO1), this protein is 23S rRNA (guanosine-2'-O-)-methyltransferase RlmB.